The primary structure comprises 412 residues: NFATC2-interacting protein (412 aa).

The disordered stretch occupies residues 1–38 (MAEPLRGRGPRSRGGRGARRARGARGRCPRARQSPARL). The span at 8–30 (RGPRSRGGRGARRARGARGRCPR) shows a compositional bias: basic residues. S49, S51, S79, S81, and S83 each carry phosphoserine. Residues 58-115 (VADPVEVPVARLPAPAKPEQDSDSDSEGAAEGPAGAPRTLVRRRRRRLLDPGEAPVVP) are disordered. Low complexity predominate over residues 86 to 96 (AAEGPAGAPRT). At S118 the chain carries Phosphoserine. K120 is covalently cross-linked (Glycyl lysine isopeptide (Lys-Gly) (interchain with G-Cter in SUMO2)). The segment at 136 to 206 (KLCPSEPEDE…SSRNKSRKHT (71 aa)) is disordered. The stretch at 168 to 227 (RKKLRKKCEKEEKKMEEFPDQDISPLPQPSSRNKSRKHTEALQKLREVNKRLQDLRSCLS) forms a coiled coil. The segment covering 175–184 (CEKEEKKMEE) has biased composition (basic and acidic residues). Residues S191, S197, and S307 each carry the phosphoserine modification. T309 and T311 each carry phosphothreonine. The Ubiquitin-like domain maps to 341-412 (LRLRVQGKEK…ESGDLIEVWG (72 aa)). 2 positions are modified to phosphoserine: S362 and S383.

In terms of assembly, interacts with NFATC2, TRAF1, TRAF2 and PRMT1. Interacts with UBE2I/UBC9. Post-translationally, methylation at the N-terminus by PRMT1 modulates interaction with the NFAT complex and results in augmented cytokine production. In terms of tissue distribution, highest level detected in spleen, thymus and testis.

It is found in the nucleus. The protein localises to the cytoplasm. Functionally, in T-helper 2 (Th2) cells, regulates the magnitude of NFAT-driven transcription of a specific subset of cytokine genes, including IL3, IL4, IL5 and IL13, but not IL2. Recruits PRMT1 to the IL4 promoter; this leads to enhancement of histone H4 'Arg-3'-methylation and facilitates subsequent histone acetylation at the IL4 locus, thus promotes robust cytokine expression. Down-regulates formation of poly-SUMO chains by UBE2I/UBC9. This chain is NFATC2-interacting protein (Nfatc2ip), found in Mus musculus (Mouse).